The following is a 370-amino-acid chain: Ornithine carbamoyltransferase, mitochondrial (370 aa).

Residues M1–T38 constitute a mitochondrion transit peptide. Carbamoyl phosphate is bound by residues S97–T100, R148, H175, and Q178. Residues N216, D282, S286, and M287 each coordinate L-ornithine. Residue C324 is the Proton acceptor of the active site. Residues C324–L325 and R351 contribute to the carbamoyl phosphate site.

This sequence belongs to the aspartate/ornithine carbamoyltransferase superfamily. OTCase family. In terms of assembly, homotrimer.

It is found in the mitochondrion matrix. The enzyme catalyses carbamoyl phosphate + L-ornithine = L-citrulline + phosphate + H(+). It functions in the pathway amino-acid biosynthesis; L-arginine biosynthesis; L-arginine from L-ornithine and carbamoyl phosphate: step 1/3. In Aspergillus niger, this protein is Ornithine carbamoyltransferase, mitochondrial (argB).